Here is a 516-residue protein sequence, read N- to C-terminus: Citrate synthase, glyoxysomal (516 aa).

Residues 1-43 (MPTDMELSPSNVARHRLAVLAAHLSAASLEPPVMASSLEAHCV) constitute a glyoxysome transit peptide. Residues histidine 329, histidine 368, and aspartate 424 contribute to the active site.

Belongs to the citrate synthase family.

The protein localises to the glyoxysome. It catalyses the reaction oxaloacetate + acetyl-CoA + H2O = citrate + CoA + H(+). It participates in carbohydrate metabolism; glyoxylate cycle; isocitrate from oxaloacetate: step 1/2. The polypeptide is Citrate synthase, glyoxysomal (Cucurbita maxima (Pumpkin)).